The primary structure comprises 486 residues: GPI-anchored wall transfer protein 1 (486 aa).

A helical membrane pass occupies residues 20 to 42 (ILEINVVTSIALTSYLCANLISY). Asparagine 43 is a glycosylation site (N-linked (GlcNAc...) asparagine). Transmembrane regions (helical) follow at residues 48-68 (IPLG…FTLY), 71-91 (DIYL…LLNY), 119-139 (PFLT…ILAV), 153-173 (TWGT…NGIV), 197-216 (FAAT…RLFF), 229-249 (YGVH…LVLI), 254-274 (SYIP…LFLI), and 299-319 (LISF…GFFI). Asparagine 342 is a glycosylation site (N-linked (GlcNAc...) asparagine). Helical transmembrane passes span 355 to 375 (SLGL…LYLI) and 387 to 407 (MPYV…YSLV). Asparagine 413 carries an N-linked (GlcNAc...) asparagine glycan. Helical transmembrane passes span 432 to 452 (LAMF…IPTI) and 458 to 478 (VSIV…FSLY).

Belongs to the PIGW family.

It is found in the endoplasmic reticulum membrane. It participates in glycolipid biosynthesis; glycosylphosphatidylinositol-anchor biosynthesis. Functionally, probable acetyltransferase, which acetylates the inositol ring of phosphatidylinositol during biosynthesis of GPI-anchor. In Candida glabrata (strain ATCC 2001 / BCRC 20586 / JCM 3761 / NBRC 0622 / NRRL Y-65 / CBS 138) (Yeast), this protein is GPI-anchored wall transfer protein 1 (GWT1).